Here is a 37-residue protein sequence, read N- to C-terminus: Large ribosomal subunit protein bL36 (37 aa).

This sequence belongs to the bacterial ribosomal protein bL36 family.

The chain is Large ribosomal subunit protein bL36 from Halalkalibacterium halodurans (strain ATCC BAA-125 / DSM 18197 / FERM 7344 / JCM 9153 / C-125) (Bacillus halodurans).